The following is a 431-amino-acid chain: Adenylosuccinate synthetase (431 aa).

Residues 12-18 (GDEGKGK) and 40-42 (GHT) each bind GTP. The Proton acceptor role is filled by Asp13. Asp13 and Gly40 together coordinate Mg(2+). IMP is bound by residues 13–16 (DEGK), 38–41 (NAGH), Thr129, Arg143, Gln224, Thr239, and Arg303. Catalysis depends on His41, which acts as the Proton donor. A substrate-binding site is contributed by 299–305 (VTTGRAR). GTP contacts are provided by residues Arg305, 331-333 (KLD), and 413-415 (GVG).

This sequence belongs to the adenylosuccinate synthetase family. In terms of assembly, homodimer. Mg(2+) serves as cofactor.

It localises to the cytoplasm. It catalyses the reaction IMP + L-aspartate + GTP = N(6)-(1,2-dicarboxyethyl)-AMP + GDP + phosphate + 2 H(+). Its pathway is purine metabolism; AMP biosynthesis via de novo pathway; AMP from IMP: step 1/2. Its function is as follows. Plays an important role in the de novo pathway of purine nucleotide biosynthesis. Catalyzes the first committed step in the biosynthesis of AMP from IMP. The sequence is that of Adenylosuccinate synthetase from Mycobacterium sp. (strain KMS).